The sequence spans 212 residues: MPPRPRFDRRAPVRELPNINDRINYPQLRVVDADGEQLGVIDREQALEVARERELDLVLVSEKADPPVCRIMDYGKFKFEQEKKAKEAKKKSHQTEVKEVKMRYKIDQHDYDVRIGQAQRFLKAGDKVKCTVIFRGREIQHTALAEVLLRRMAKDLEEPAEVQQPPKREGRNMIMFLTPRKAPLVKKDKDEEVVNKAVRTIPSPARRINTQD.

Belongs to the IF-3 family. In terms of assembly, monomer.

Its subcellular location is the cytoplasm. IF-3 binds to the 30S ribosomal subunit and shifts the equilibrium between 70S ribosomes and their 50S and 30S subunits in favor of the free subunits, thus enhancing the availability of 30S subunits on which protein synthesis initiation begins. The protein is Translation initiation factor IF-3 of Synechococcus sp. (strain CC9311).